The following is a 363-amino-acid chain: Cyanuric acid amidohydrolase (363 aa).

The segment at methionine 1–proline 103 is RU A. Residues arginine 51 and serine 82 to glycine 83 each bind substrate. An RU B region spans residues glycine 111–proline 247. Lysine 161 is an active-site residue. Substrate-binding positions include arginine 193 and serine 230 to alanine 231. The Nucleophile role is filled by serine 230. Positions tyrosine 253 to serine 363 are RU C. Residue glutamate 297 participates in Mg(2+) binding. Residues arginine 324 and serine 343–glycine 344 contribute to the substrate site. Residues alanine 346, glutamine 349, glycine 350, proline 351, and glycine 354 each contribute to the Mg(2+) site.

It belongs to the cyclic amide hydrolase (CyAH) family. As to quaternary structure, homotetramer.

It carries out the reaction cyanurate + H2O = 1-carboxybiuret + H(+). It functions in the pathway xenobiotic degradation; atrazine degradation; biuret from cyanurate: step 1/1. With respect to regulation, inhibited by barbituric acid. Functionally, responsible for the hydrolysis of cyanuric acid, an intermediate formed during catabolism of s-triazine based compounds in herbicides such as atrazine and polymers such as melamine. Catalyzes the hydrolytic opening of the s-triazine ring of cyanuric acid (2,4,6-trihydroxy-s-triazine) to yield carbon dioxide and carboxybiuret, which spontaneously decarboxylates to biuret. This Ectopseudomonas oleovorans (strain CECT 5344) (Pseudomonas pseudoalcaligenes) protein is Cyanuric acid amidohydrolase.